Consider the following 112-residue polypeptide: T cell receptor alpha variable 7 (112 aa).

An N-terminal signal peptide occupies residues 1–21; the sequence is MEKMRRPVLIIFCLCLGWANG. An Ig-like domain is found at 22 to 112; it reads ENQVEHSPHF…DSATYFCAVD (91 aa). Cysteine 44 and cysteine 109 are joined by a disulfide. N-linked (GlcNAc...) asparagine glycans are attached at residues asparagine 84 and asparagine 90.

As to quaternary structure, alpha-beta TR is a heterodimer composed of an alpha and beta chain; disulfide-linked. The alpha-beta TR is associated with the transmembrane signaling CD3 coreceptor proteins to form the TR-CD3 (TcR or TCR). The assembly of alpha-beta TR heterodimers with CD3 occurs in the endoplasmic reticulum where a single alpha-beta TR heterodimer associates with one CD3D-CD3E heterodimer, one CD3G-CD3E heterodimer and one CD247 homodimer forming a stable octameric structure. CD3D-CD3E and CD3G-CD3E heterodimers preferentially associate with TR alpha and TR beta chains, respectively. The association of the CD247 homodimer is the last step of TcR assembly in the endoplasmic reticulum and is required for transport to the cell surface.

It localises to the cell membrane. In terms of biological role, v region of the variable domain of T cell receptor (TR) alpha chain that participates in the antigen recognition. Alpha-beta T cell receptors are antigen specific receptors which are essential to the immune response and are present on the cell surface of T lymphocytes. Recognize peptide-major histocompatibility (MH) (pMH) complexes that are displayed by antigen presenting cells (APC), a prerequisite for efficient T cell adaptive immunity against pathogens. Binding of alpha-beta TR to pMH complex initiates TR-CD3 clustering on the cell surface and intracellular activation of LCK that phosphorylates the ITAM motifs of CD3G, CD3D, CD3E and CD247 enabling the recruitment of ZAP70. In turn ZAP70 phosphorylates LAT, which recruits numerous signaling molecules to form the LAT signalosome. The LAT signalosome propagates signal branching to three major signaling pathways, the calcium, the mitogen-activated protein kinase (MAPK) kinase and the nuclear factor NF-kappa-B (NF-kB) pathways, leading to the mobilization of transcription factors that are critical for gene expression and essential for T cell growth and differentiation. The T cell repertoire is generated in the thymus, by V-(D)-J rearrangement. This repertoire is then shaped by intrathymic selection events to generate a peripheral T cell pool of self-MH restricted, non-autoaggressive T cells. Post-thymic interaction of alpha-beta TR with the pMH complexes shapes TR structural and functional avidity. The protein is T cell receptor alpha variable 7 of Homo sapiens (Human).